A 321-amino-acid chain; its full sequence is Cytochrome f (321 aa).

Positions Met-1–Ala-38 are cleaved as a signal peptide. Residues Tyr-39, Cys-59, Cys-62, and His-63 each contribute to the heme site. The chain crosses the membrane as a helical span at residues Val-288–Lys-308.

This sequence belongs to the cytochrome f family. The 4 large subunits of the cytochrome b6-f complex are cytochrome b6, subunit IV (17 kDa polypeptide, PetD), cytochrome f and the Rieske protein, while the 4 small subunits are PetG, PetL, PetM and PetN. The complex functions as a dimer. The cofactor is heme.

The protein resides in the cellular thylakoid membrane. Functionally, component of the cytochrome b6-f complex, which mediates electron transfer between photosystem II (PSII) and photosystem I (PSI), cyclic electron flow around PSI, and state transitions. This chain is Cytochrome f, found in Prochlorococcus marinus (strain NATL2A).